The sequence spans 342 residues: Ribosomal RNA small subunit methyltransferase C (342 aa).

It belongs to the methyltransferase superfamily. RsmC family. In terms of assembly, monomer.

The protein localises to the cytoplasm. It catalyses the reaction guanosine(1207) in 16S rRNA + S-adenosyl-L-methionine = N(2)-methylguanosine(1207) in 16S rRNA + S-adenosyl-L-homocysteine + H(+). Specifically methylates the guanine in position 1207 of 16S rRNA in the 30S particle. The protein is Ribosomal RNA small subunit methyltransferase C of Salmonella paratyphi B (strain ATCC BAA-1250 / SPB7).